The sequence spans 361 residues: S-adenosylmethionine:tRNA ribosyltransferase-isomerase (361 aa).

Belongs to the QueA family. Monomer.

Its subcellular location is the cytoplasm. The enzyme catalyses 7-aminomethyl-7-carbaguanosine(34) in tRNA + S-adenosyl-L-methionine = epoxyqueuosine(34) in tRNA + adenine + L-methionine + 2 H(+). The protein operates within tRNA modification; tRNA-queuosine biosynthesis. Transfers and isomerizes the ribose moiety from AdoMet to the 7-aminomethyl group of 7-deazaguanine (preQ1-tRNA) to give epoxyqueuosine (oQ-tRNA). The polypeptide is S-adenosylmethionine:tRNA ribosyltransferase-isomerase (Actinobacillus pleuropneumoniae serotype 5b (strain L20)).